The following is a 180-amino-acid chain: Ribulose bisphosphate carboxylase small subunit, chloroplastic 2 (180 aa).

A chloroplast-targeting transit peptide spans 1 to 56 (MASMISSSAVTTVSRASRGQSAAVAPFGGLKSMTGFPVKKVNTDITSITSNGGRVK).

Belongs to the RuBisCO small chain family. As to quaternary structure, heterohexadecamer of 8 large and 8 small subunits.

It is found in the plastid. The protein resides in the chloroplast. RuBisCO catalyzes two reactions: the carboxylation of D-ribulose 1,5-bisphosphate, the primary event in carbon dioxide fixation, as well as the oxidative fragmentation of the pentose substrate. Both reactions occur simultaneously and in competition at the same active site. Although the small subunit is not catalytic it is essential for maximal activity. This chain is Ribulose bisphosphate carboxylase small subunit, chloroplastic 2, found in Pisum sativum (Garden pea).